The chain runs to 226 residues: ATP-dependent dethiobiotin synthetase BioD (226 aa).

12 to 17 lines the ATP pocket; sequence DAGKTV. Residue threonine 16 participates in Mg(2+) binding. Residue lysine 39 is part of the active site. A substrate-binding site is contributed by serine 43. ATP contacts are provided by residues aspartate 47, 108-111, 168-169, 200-202, and asparagine 207; these read EGVG, NC, and PYL. Aspartate 47 and glutamate 108 together coordinate Mg(2+).

The protein belongs to the dethiobiotin synthetase family. As to quaternary structure, homodimer. Mg(2+) serves as cofactor.

It is found in the cytoplasm. It catalyses the reaction (7R,8S)-7,8-diammoniononanoate + CO2 + ATP = (4R,5S)-dethiobiotin + ADP + phosphate + 3 H(+). The enzyme catalyses (7R,8S)-8-amino-7-(carboxyamino)nonanoate + ATP = (4R,5S)-dethiobiotin + ADP + phosphate + H(+). Its pathway is cofactor biosynthesis; biotin biosynthesis; biotin from 7,8-diaminononanoate: step 1/2. Catalyzes a mechanistically unusual reaction, the ATP-dependent insertion of CO2 between the N7 and N8 nitrogen atoms of 7,8-diaminopelargonic acid (DAPA, also called 7,8-diammoniononanoate) to form a ureido ring. This cyanobacterium does not encode bioA (which catalyzes the formation of the precursor for this reaction in the cannonical pathway), instead it encodes bioU, which replaces bioA and also performs the first half of the cannonical BioD reaction. Thus in this organism BioD has a different substrate. This Cyanothece sp. (strain PCC 7425 / ATCC 29141) protein is ATP-dependent dethiobiotin synthetase BioD.